The following is a 142-amino-acid chain: Hemoglobin subunit alpha-4 (142 aa).

Residues 2–142 form the Globin domain; it reads VLSAADKSNV…VSTVLTSKYR (141 aa). Residue His59 coordinates O2. His88 is a heme b binding site.

It belongs to the globin family. Heterotetramer of two alpha chains and two beta chains. In terms of tissue distribution, red blood cells.

Functionally, involved in oxygen transport from the lung to the various peripheral tissues. The polypeptide is Hemoglobin subunit alpha-4 (Bubalus bubalis (Domestic water buffalo)).